The primary structure comprises 379 residues: Cytochrome b (379 aa).

The next 4 membrane-spanning stretches (helical) occupy residues 33-53 (FGSLLGACLTIQIITGLFLAM), 77-98 (WTIRYLHANGASMFFLCLFIHV), 113-133 (WNVGIILLFSVMATAFMGYVL), and 178-198 (FFALHFILPFIISALVMIHLL). Positions 83 and 97 each coordinate heme b. Residues histidine 182 and histidine 196 each contribute to the heme b site. A ubiquinone is bound at residue histidine 201. 4 helical membrane-spanning segments follow: residues 226–246 (TKDFLGLLLLTLLLMTMALFY), 288–308 (LGGVMALILSILILMVIPFLQ), 320–340 (LSQFLFWILVADLLTLTWIGG), and 347–367 (FINIGQMASMLYFSLMVFIMP).

Belongs to the cytochrome b family. The cytochrome bc1 complex contains 11 subunits: 3 respiratory subunits (MT-CYB, CYC1 and UQCRFS1), 2 core proteins (UQCRC1 and UQCRC2) and 6 low-molecular weight proteins (UQCRH/QCR6, UQCRB/QCR7, UQCRQ/QCR8, UQCR10/QCR9, UQCR11/QCR10 and a cleavage product of UQCRFS1). This cytochrome bc1 complex then forms a dimer. The cofactor is heme b.

Its subcellular location is the mitochondrion inner membrane. Functionally, component of the ubiquinol-cytochrome c reductase complex (complex III or cytochrome b-c1 complex) that is part of the mitochondrial respiratory chain. The b-c1 complex mediates electron transfer from ubiquinol to cytochrome c. Contributes to the generation of a proton gradient across the mitochondrial membrane that is then used for ATP synthesis. The polypeptide is Cytochrome b (MT-CYB) (Lepilemur dorsalis (Grey-backed sportive lemur)).